The following is a 156-amino-acid chain: Small ribosomal subunit protein uS7 (156 aa).

This sequence belongs to the universal ribosomal protein uS7 family. Part of the 30S ribosomal subunit. Contacts proteins S9 and S11.

Functionally, one of the primary rRNA binding proteins, it binds directly to 16S rRNA where it nucleates assembly of the head domain of the 30S subunit. Is located at the subunit interface close to the decoding center, probably blocks exit of the E-site tRNA. The protein is Small ribosomal subunit protein uS7 of Finegoldia magna (strain ATCC 29328 / DSM 20472 / WAL 2508) (Peptostreptococcus magnus).